A 959-amino-acid polypeptide reads, in one-letter code: Isoleucine--tRNA ligase (959 aa).

The 'HIGH' region signature appears at 60–70; sequence PYANGSLHMGH. Residue Glu569 participates in L-isoleucyl-5'-AMP binding. A 'KMSKS' region motif is present at residues 610 to 614; that stretch reads KMSKS. Residue Lys613 coordinates ATP. Zn(2+)-binding residues include Cys928, Cys931, Cys948, and Cys951.

The protein belongs to the class-I aminoacyl-tRNA synthetase family. IleS type 1 subfamily. In terms of assembly, monomer. Zn(2+) is required as a cofactor.

It localises to the cytoplasm. It carries out the reaction tRNA(Ile) + L-isoleucine + ATP = L-isoleucyl-tRNA(Ile) + AMP + diphosphate. In terms of biological role, catalyzes the attachment of isoleucine to tRNA(Ile). As IleRS can inadvertently accommodate and process structurally similar amino acids such as valine, to avoid such errors it has two additional distinct tRNA(Ile)-dependent editing activities. One activity is designated as 'pretransfer' editing and involves the hydrolysis of activated Val-AMP. The other activity is designated 'posttransfer' editing and involves deacylation of mischarged Val-tRNA(Ile). The polypeptide is Isoleucine--tRNA ligase (Gloeothece citriformis (strain PCC 7424) (Cyanothece sp. (strain PCC 7424))).